The primary structure comprises 241 residues: Pyridoxine 5'-phosphate synthase (241 aa).

Position 7 (asparagine 7) interacts with 3-amino-2-oxopropyl phosphate. 9–10 (DH) is a 1-deoxy-D-xylulose 5-phosphate binding site. Residue arginine 18 participates in 3-amino-2-oxopropyl phosphate binding. Histidine 43 acts as the Proton acceptor in catalysis. 1-deoxy-D-xylulose 5-phosphate-binding residues include arginine 45 and histidine 50. Glutamate 70 acts as the Proton acceptor in catalysis. Threonine 100 serves as a coordination point for 1-deoxy-D-xylulose 5-phosphate. Histidine 190 acts as the Proton donor in catalysis. 3-amino-2-oxopropyl phosphate is bound by residues glycine 191 and 212 to 213 (GH).

Belongs to the PNP synthase family. As to quaternary structure, homooctamer; tetramer of dimers.

The protein resides in the cytoplasm. It catalyses the reaction 3-amino-2-oxopropyl phosphate + 1-deoxy-D-xylulose 5-phosphate = pyridoxine 5'-phosphate + phosphate + 2 H2O + H(+). Its pathway is cofactor biosynthesis; pyridoxine 5'-phosphate biosynthesis; pyridoxine 5'-phosphate from D-erythrose 4-phosphate: step 5/5. Catalyzes the complicated ring closure reaction between the two acyclic compounds 1-deoxy-D-xylulose-5-phosphate (DXP) and 3-amino-2-oxopropyl phosphate (1-amino-acetone-3-phosphate or AAP) to form pyridoxine 5'-phosphate (PNP) and inorganic phosphate. The protein is Pyridoxine 5'-phosphate synthase of Bordetella avium (strain 197N).